Here is a 196-residue protein sequence, read N- to C-terminus: Pyridoxal 5'-phosphate synthase subunit PdxT (196 aa).

47–49 serves as a coordination point for L-glutamine; sequence GES. The Nucleophile role is filled by Cys79. L-glutamine contacts are provided by residues Arg106 and 134-135; that span reads IR. Catalysis depends on charge relay system residues His170 and Glu172.

The protein belongs to the glutaminase PdxT/SNO family. In terms of assembly, in the presence of PdxS, forms a dodecamer of heterodimers. Only shows activity in the heterodimer.

It catalyses the reaction aldehydo-D-ribose 5-phosphate + D-glyceraldehyde 3-phosphate + L-glutamine = pyridoxal 5'-phosphate + L-glutamate + phosphate + 3 H2O + H(+). The catalysed reaction is L-glutamine + H2O = L-glutamate + NH4(+). The protein operates within cofactor biosynthesis; pyridoxal 5'-phosphate biosynthesis. Functionally, catalyzes the hydrolysis of glutamine to glutamate and ammonia as part of the biosynthesis of pyridoxal 5'-phosphate. The resulting ammonia molecule is channeled to the active site of PdxS. The chain is Pyridoxal 5'-phosphate synthase subunit PdxT from Bacillus cereus (strain ZK / E33L).